Consider the following 171-residue polypeptide: Ly6/PLAUR domain-containing protein 6 (171 aa).

Residues Met-1–Ser-25 form the signal peptide. A UPAR/Ly6 domain is found at Phe-47 to Ala-141. 6 cysteine pairs are disulfide-bonded: Cys-49-Cys-77, Cys-52-Cys-61, Cys-70-Cys-96, Cys-102-Cys-121, Cys-107-Cys-118, and Cys-122-Cys-127. The NxI motif motif lies at Asn-88–Ile-90. 2 N-linked (GlcNAc...) asparagine glycosylation sites follow: Asn-134 and Asn-147. A lipid anchor (GPI-anchor amidated asparagine) is attached at Asn-147. Positions Gln-148–Leu-171 are cleaved as a propeptide — removed in mature form.

In terms of assembly, interacts with nicotinic acetylcholine receptors (nAChRs) including CHRNA3, CHRNA4, CHRNA5, CHRNA6, CHRNA7, CHRNB2 and CHRNB4. Interacts (via NxI motif) with LRP6. Expressed at high levels in the cortex and cerebellum of the brain, at moderate levels in the lung, kidney, and liver, and at low levels in the heart and prostate (at protein level). Expressed in neurons (at protein level).

The protein localises to the secreted. It localises to the cytoplasm. The protein resides in the cell membrane. Its subcellular location is the synapse. It is found in the synaptosome. The protein localises to the membrane raft. It localises to the cell projection. The protein resides in the dendrite. Its subcellular location is the perikaryon. In terms of biological role, acts as a modulator of nicotinic acetylcholine receptors (nAChRs) function in the brain. Inhibits nicotine-induced Ca(2+) influx through nAChRs. In vitro, specifically inhibits alpha-3:beta-4 and alpha-7 nAChR currents in an allosteric manner. Acts as a positive regulator of Wnt/beta-catenin signaling. The sequence is that of Ly6/PLAUR domain-containing protein 6 (Lypd6) from Rattus norvegicus (Rat).